Here is a 276-residue protein sequence, read N- to C-terminus: Shikimate dehydrogenase (NADP(+)) (276 aa).

Residues 15–17 (SLS) and T62 contribute to the shikimate site. The active-site Proton acceptor is K66. E78 provides a ligand contact to NADP(+). Positions 87 and 102 each coordinate shikimate. NADP(+)-binding positions include 151–156 (NRTVEK) and I218. Residue Y220 coordinates shikimate. G241 is a binding site for NADP(+).

Belongs to the shikimate dehydrogenase family. Homodimer.

The enzyme catalyses shikimate + NADP(+) = 3-dehydroshikimate + NADPH + H(+). It functions in the pathway metabolic intermediate biosynthesis; chorismate biosynthesis; chorismate from D-erythrose 4-phosphate and phosphoenolpyruvate: step 4/7. Involved in the biosynthesis of the chorismate, which leads to the biosynthesis of aromatic amino acids. Catalyzes the reversible NADPH linked reduction of 3-dehydroshikimate (DHSA) to yield shikimate (SA). The polypeptide is Shikimate dehydrogenase (NADP(+)) (Geobacillus kaustophilus (strain HTA426)).